The primary structure comprises 64 residues: Endodeoxyribonuclease toxin RalR (64 aa).

Ca(2+) is required as a cofactor. It depends on Mg(2+) as a cofactor.

Its activity is regulated as follows. Inhibited by EDTA. In terms of biological role, toxic component of a type I toxin-antitoxin (TA) system. Upon overexpression inhibits growth and reduces colony-forming units in both the presence and absence of the Rac prophage, cells become filamentous. Has deoxyribonuclease activity (probably endonucleolytic), does not digest RNA. Its toxic effects are neutralized by sRNA antitoxin RalA, which is encoded in trans on the opposite DNA strand. Has RAL-like activity. The sequence is that of Endodeoxyribonuclease toxin RalR (ralR) from Escherichia coli (strain K12).